The following is a 670-amino-acid chain: NADH-ubiquinone oxidoreductase chain 5 (670 aa).

15 consecutive transmembrane segments (helical) span residues 3 to 23, 36 to 56, 76 to 96, 113 to 133, 136 to 156, 178 to 198, 218 to 238, 250 to 270, 283 to 303, 319 to 339, 340 to 360, 375 to 395, 425 to 445, 461 to 481, and 618 to 638; these read LLIV…GRFL, VSFS…GASA, FLFD…SSLV, FMCY…GDNF, LFLG…FWFT, LALG…STIF, ITLI…QIGL, TPVS…FMIA, LIVI…TGIL, LGYM…FHLM, NHAF…HAMS, FPLT…FPFL, VSVL…FLVP, IPMA…GYLA, and SGSV…FVTF.

Belongs to the complex I subunit 5 family.

The protein localises to the mitochondrion inner membrane. It carries out the reaction a ubiquinone + NADH + 5 H(+)(in) = a ubiquinol + NAD(+) + 4 H(+)(out). In terms of biological role, core subunit of the mitochondrial membrane respiratory chain NADH dehydrogenase (Complex I) that is believed to belong to the minimal assembly required for catalysis. Complex I functions in the transfer of electrons from NADH to the respiratory chain. The immediate electron acceptor for the enzyme is believed to be ubiquinone. The protein is NADH-ubiquinone oxidoreductase chain 5 (ND5) of Triticum aestivum (Wheat).